Reading from the N-terminus, the 234-residue chain is Leucyl/phenylalanyl-tRNA--protein transferase (234 aa).

The protein belongs to the L/F-transferase family.

The protein localises to the cytoplasm. It catalyses the reaction N-terminal L-lysyl-[protein] + L-leucyl-tRNA(Leu) = N-terminal L-leucyl-L-lysyl-[protein] + tRNA(Leu) + H(+). It carries out the reaction N-terminal L-arginyl-[protein] + L-leucyl-tRNA(Leu) = N-terminal L-leucyl-L-arginyl-[protein] + tRNA(Leu) + H(+). The catalysed reaction is L-phenylalanyl-tRNA(Phe) + an N-terminal L-alpha-aminoacyl-[protein] = an N-terminal L-phenylalanyl-L-alpha-aminoacyl-[protein] + tRNA(Phe). In terms of biological role, functions in the N-end rule pathway of protein degradation where it conjugates Leu, Phe and, less efficiently, Met from aminoacyl-tRNAs to the N-termini of proteins containing an N-terminal arginine or lysine. The polypeptide is Leucyl/phenylalanyl-tRNA--protein transferase (Enterobacter sp. (strain 638)).